Consider the following 216-residue polypeptide: Molybdenum cofactor guanylyltransferase (216 aa).

GTP is bound by residues 16-18 (LAG), Lys28, Asn57, Asp73, and Asp108. Asp108 is a Mg(2+) binding site.

The protein belongs to the MobA family. In terms of assembly, monomer. Requires Mg(2+) as cofactor.

It is found in the cytoplasm. It carries out the reaction Mo-molybdopterin + GTP + H(+) = Mo-molybdopterin guanine dinucleotide + diphosphate. Transfers a GMP moiety from GTP to Mo-molybdopterin (Mo-MPT) cofactor (Moco or molybdenum cofactor) to form Mo-molybdopterin guanine dinucleotide (Mo-MGD) cofactor. This is Molybdenum cofactor guanylyltransferase from Rhizobium rhizogenes (strain K84 / ATCC BAA-868) (Agrobacterium radiobacter).